Reading from the N-terminus, the 119-residue chain is Large ribosomal subunit protein bL20 (119 aa).

It belongs to the bacterial ribosomal protein bL20 family.

In terms of biological role, binds directly to 23S ribosomal RNA and is necessary for the in vitro assembly process of the 50S ribosomal subunit. It is not involved in the protein synthesizing functions of that subunit. The sequence is that of Large ribosomal subunit protein bL20 from Dehalococcoides mccartyi (strain ATCC BAA-2266 / KCTC 15142 / 195) (Dehalococcoides ethenogenes (strain 195)).